The chain runs to 340 residues: N-acetyl-gamma-glutamyl-phosphate reductase (340 aa).

Cys149 is an active-site residue.

This sequence belongs to the NAGSA dehydrogenase family. Type 1 subfamily.

The protein localises to the cytoplasm. The catalysed reaction is N-acetyl-L-glutamate 5-semialdehyde + phosphate + NADP(+) = N-acetyl-L-glutamyl 5-phosphate + NADPH + H(+). Its pathway is amino-acid biosynthesis; L-arginine biosynthesis; N(2)-acetyl-L-ornithine from L-glutamate: step 3/4. Catalyzes the NADPH-dependent reduction of N-acetyl-5-glutamyl phosphate to yield N-acetyl-L-glutamate 5-semialdehyde. The polypeptide is N-acetyl-gamma-glutamyl-phosphate reductase (Vesicomyosocius okutanii subsp. Calyptogena okutanii (strain HA)).